A 334-amino-acid chain; its full sequence is Catabolite repressor/activator (334 aa).

The region spanning 1-58 is the HTH lacI-type domain; it reads MKLDEIARLAGVSRTTASYVINGKAKQYRVSDKTVEKVMAVVREHNYHPNAVAAGLRA. The H-T-H motif DNA-binding region spans 3-22; sequence LDEIARLAGVSRTTASYVIN.

As to quaternary structure, homotetramer.

Functionally, global transcriptional regulator, which plays an important role in the regulation of carbon metabolism. In Escherichia coli O157:H7, this protein is Catabolite repressor/activator (cra).